The chain runs to 841 residues: Translation initiation factor IF-2 (841 aa).

Basic and acidic residues-rich tracts occupy residues 1-12, 50-92, 114-170, 188-202, and 213-235; these read MSDNEIKNEAPK, EAAL…EATK, EQPK…REEA, READRDNDRRSEANR, and KKGDREDKNERNADRRNQKDVKG. Disordered regions lie at residues 1 to 24 and 50 to 246; these read MSDNEIKNEAPKKLSLQRRTKTTV and EAAL…GSAL. The tr-type G domain occupies 340–510; that stretch reads TRAPVVTIMG…LLQSEVLELT (171 aa). The interval 349–356 is G1; it reads GHVDHGKT. Residue 349 to 356 participates in GTP binding; that stretch reads GHVDHGKT. The tract at residues 374–378 is G2; sequence GITQH. The segment at 396–399 is G3; sequence DTPG. Residues 396 to 400 and 450 to 453 contribute to the GTP site; these read DTPGH and NKID. The interval 450–453 is G4; that stretch reads NKID. The tract at residues 486–488 is G5; sequence SAK.

This sequence belongs to the TRAFAC class translation factor GTPase superfamily. Classic translation factor GTPase family. IF-2 subfamily.

It is found in the cytoplasm. One of the essential components for the initiation of protein synthesis. Protects formylmethionyl-tRNA from spontaneous hydrolysis and promotes its binding to the 30S ribosomal subunits. Also involved in the hydrolysis of GTP during the formation of the 70S ribosomal complex. This chain is Translation initiation factor IF-2, found in Actinobacillus pleuropneumoniae serotype 3 (strain JL03).